Here is a 482-residue protein sequence, read N- to C-terminus: ATP synthase subunit beta (482 aa).

Residue 161–168 (GGAGVGKT) coordinates ATP.

Belongs to the ATPase alpha/beta chains family. F-type ATPases have 2 components, CF(1) - the catalytic core - and CF(0) - the membrane proton channel. CF(1) has five subunits: alpha(3), beta(3), gamma(1), delta(1), epsilon(1). CF(0) has three main subunits: a(1), b(2) and c(9-12). The alpha and beta chains form an alternating ring which encloses part of the gamma chain. CF(1) is attached to CF(0) by a central stalk formed by the gamma and epsilon chains, while a peripheral stalk is formed by the delta and b chains.

Its subcellular location is the cell inner membrane. The catalysed reaction is ATP + H2O + 4 H(+)(in) = ADP + phosphate + 5 H(+)(out). Its function is as follows. Produces ATP from ADP in the presence of a proton gradient across the membrane. The catalytic sites are hosted primarily by the beta subunits. This is ATP synthase subunit beta from Anaeromyxobacter dehalogenans (strain 2CP-C).